The sequence spans 112 residues: UPF0102 protein CHAB381_0216 (112 aa).

It belongs to the UPF0102 family.

This is UPF0102 protein CHAB381_0216 from Campylobacter hominis (strain ATCC BAA-381 / DSM 21671 / CCUG 45161 / LMG 19568 / NCTC 13146 / CH001A).